A 166-amino-acid polypeptide reads, in one-letter code: Small ribosomal subunit protein uS5 (166 aa).

The region spanning 11–74 is the S5 DRBM domain; the sequence is LQEKLIAVNR…EKARRNMITV (64 aa).

The protein belongs to the universal ribosomal protein uS5 family. In terms of assembly, part of the 30S ribosomal subunit. Contacts proteins S4 and S8.

Its function is as follows. With S4 and S12 plays an important role in translational accuracy. Located at the back of the 30S subunit body where it stabilizes the conformation of the head with respect to the body. In Histophilus somni (strain 2336) (Haemophilus somnus), this protein is Small ribosomal subunit protein uS5.